Consider the following 375-residue polypeptide: MKFELDTTDGRARRGRLVFDRGVVETPAFMPVGTYGTVKGMTPEEVEATGAQIILGNTFHLWLRPGQEVMKLHGDLHDFMQWKGPILTDSGGFQVFSLGDIRKITEKGVHFRNPINGDPIFLDPEKSMEIQYDLGSDIVMIFDECTPYPADWDYAKRSMEMSLRWAQRSRDRFDSLENKNALFGIIQGSVYEDLRDISVKGLVEIGFDGYAVGGLAVGEPKEDMHRILEHVCPQIPEDKPRYLMGVGKPEDLVEGVRRGIDMFDCVMPTRNARNGHLFVTDGVVKIRNAKHKSDTSTLDAECDCYTCRHYSRAYLYHLDRCNEILGARLNTIHNLRYYQRLMAGLRKAIEEGKLESFVTDFYQRQGRDVPPLNVD.

Asp-89 functions as the Proton acceptor in the catalytic mechanism. Residues 89–93 (DSGGF), Asp-143, Gln-187, and Gly-214 each bind substrate. The RNA binding stretch occupies residues 245–251 (GVGKPED). Asp-264 acts as the Nucleophile in catalysis. Residues 269–273 (TRNAR) are RNA binding; important for wobble base 34 recognition. Residues Cys-302, Cys-304, Cys-307, and His-333 each coordinate Zn(2+).

Belongs to the queuine tRNA-ribosyltransferase family. As to quaternary structure, homodimer. Within each dimer, one monomer is responsible for RNA recognition and catalysis, while the other monomer binds to the replacement base PreQ1. It depends on Zn(2+) as a cofactor.

It carries out the reaction 7-aminomethyl-7-carbaguanine + guanosine(34) in tRNA = 7-aminomethyl-7-carbaguanosine(34) in tRNA + guanine. The protein operates within tRNA modification; tRNA-queuosine biosynthesis. In terms of biological role, catalyzes the base-exchange of a guanine (G) residue with the queuine precursor 7-aminomethyl-7-deazaguanine (PreQ1) at position 34 (anticodon wobble position) in tRNAs with GU(N) anticodons (tRNA-Asp, -Asn, -His and -Tyr). Catalysis occurs through a double-displacement mechanism. The nucleophile active site attacks the C1' of nucleotide 34 to detach the guanine base from the RNA, forming a covalent enzyme-RNA intermediate. The proton acceptor active site deprotonates the incoming PreQ1, allowing a nucleophilic attack on the C1' of the ribose to form the product. After dissociation, two additional enzymatic reactions on the tRNA convert PreQ1 to queuine (Q), resulting in the hypermodified nucleoside queuosine (7-(((4,5-cis-dihydroxy-2-cyclopenten-1-yl)amino)methyl)-7-deazaguanosine). The polypeptide is Queuine tRNA-ribosyltransferase (Enterobacter sp. (strain 638)).